The following is a 66-amino-acid chain: Large ribosomal subunit protein bL33c (66 aa).

The protein belongs to the bacterial ribosomal protein bL33 family.

Its subcellular location is the plastid. It is found in the chloroplast. This chain is Large ribosomal subunit protein bL33c, found in Nandina domestica (Heavenly bamboo).